The primary structure comprises 935 residues: Auxin response factor 6 (935 aa).

Positions 129–231 form a DNA-binding region, TF-B3; sequence FCKTLTASDT…QLLLGIRRAN (103 aa). 2 disordered regions span residues 536 to 624 and 645 to 714; these read QAYL…PLHT and SAMT…SASD. Composition is skewed to low complexity over residues 546 to 565 and 573 to 582; these read QPQSQAQSQSNNHLSQQQQQ and SASSAAVVSA. Polar residues-rich tracts occupy residues 583–624 and 661–689; these read MSQF…PLHT and SSFQHSGAGNNNTQSVLEQLGQSHTSNVP. The region spanning 796–880 is the PB1 domain; sequence NTFVKVYKSG…WCIKILSPQE (85 aa). The segment covering 896–909 has biased composition (polar residues); sequence PSSNNVDKLPSNGN. Positions 896 to 917 are disordered; that stretch reads PSSNNVDKLPSNGNCDDFGNRS.

The protein belongs to the ARF family. In terms of assembly, homodimers and heterodimers. In terms of tissue distribution, expressed in the whole plant.

The protein resides in the nucleus. In terms of biological role, auxin response factors (ARFs) are transcriptional factors that bind specifically to the DNA sequence 5'-TGTCTC-3' found in the auxin-responsive promoter elements (AuxREs). Seems to act as transcriptional activator. Formation of heterodimers with Aux/IAA proteins may alter their ability to modulate early auxin response genes expression. Regulates both stamen and gynoecium maturation. Promotes jasmonic acid production. Partially redundant with ARF8. The polypeptide is Auxin response factor 6 (ARF6) (Arabidopsis thaliana (Mouse-ear cress)).